Reading from the N-terminus, the 429-residue chain is Enolase (429 aa).

(2R)-2-phosphoglycerate is bound at residue Gln163. Glu205 (proton donor) is an active-site residue. Asp242, Glu285, and Asp312 together coordinate Mg(2+). (2R)-2-phosphoglycerate is bound by residues Lys337, Arg366, Ser367, and Lys388. Residue Lys337 is the Proton acceptor of the active site.

This sequence belongs to the enolase family. In terms of assembly, component of the RNA degradosome, a multiprotein complex involved in RNA processing and mRNA degradation. The cofactor is Mg(2+).

The protein resides in the cytoplasm. It is found in the secreted. It localises to the cell surface. The enzyme catalyses (2R)-2-phosphoglycerate = phosphoenolpyruvate + H2O. Its pathway is carbohydrate degradation; glycolysis; pyruvate from D-glyceraldehyde 3-phosphate: step 4/5. Catalyzes the reversible conversion of 2-phosphoglycerate (2-PG) into phosphoenolpyruvate (PEP). It is essential for the degradation of carbohydrates via glycolysis. This Alkalilimnicola ehrlichii (strain ATCC BAA-1101 / DSM 17681 / MLHE-1) protein is Enolase.